The sequence spans 593 residues: MRTDYCGAINTRHLDKTITLCGWVHRRRDHGGVIFIDLRDREGIVQIVCDPDNVAAFQIAEKIRSEFVLAITGTVRHRPEGTVNHGILSGEIEVLVNAIEILNPSLTPPFQMDDDNLSEAIRLEYRYLDLRRPVMQRNIRLRHQVTMAVRIFLDQHGFIDVETPMLTKSTPEGARDYLVPSRVNAGHFFALPQSPQLFKQLLMVSGFDRYYQITRCFRDEDLRADRQPEFTQIDIETSFLPENEIMGMMEDMIRRLFASVLDISLPDPFPRLSYADAMFLYGSDKPDLRVPLVLTELTDLMQDVPFQVFRDAAQKAGGRVAALRVPGGGELSRKEIDEYTQFVGIYGAKGLAYIKINDLTKGIEGLQSPILKFLPESVVQSILERTQAQNGDLVFFGADKAKVVNDALGALRVKIGHERNLATDSWQPLWVVDFPMFEWDEEEKRWQALHHPFTSPSQGHEDFLTSDPGKALSRAYDMVLNGMEIGGGSIRIHRQDIQSKVFQALNISDDEAKLKFGFLLDALQYGAPPHGGIAFGLDRIVAMMTGADSIRDVIAFPKTQRAQCLLTQAPGAVEEKQLRELHIRLRRTENTNN.

Position 172 (Glu-172) interacts with L-aspartate. An aspartate region spans residues 196-199 (QLFK). Arg-218 lines the L-aspartate pocket. Residues 218 to 220 (RDE) and Gln-227 contribute to the ATP site. His-450 serves as a coordination point for L-aspartate. Glu-484 serves as a coordination point for ATP. L-aspartate is bound at residue Arg-491. 536–539 (GLDR) provides a ligand contact to ATP.

The protein belongs to the class-II aminoacyl-tRNA synthetase family. Type 1 subfamily. Homodimer.

It is found in the cytoplasm. It catalyses the reaction tRNA(Asx) + L-aspartate + ATP = L-aspartyl-tRNA(Asx) + AMP + diphosphate. In terms of biological role, aspartyl-tRNA synthetase with relaxed tRNA specificity since it is able to aspartylate not only its cognate tRNA(Asp) but also tRNA(Asn). Reaction proceeds in two steps: L-aspartate is first activated by ATP to form Asp-AMP and then transferred to the acceptor end of tRNA(Asp/Asn). In Nitrosomonas europaea (strain ATCC 19718 / CIP 103999 / KCTC 2705 / NBRC 14298), this protein is Aspartate--tRNA(Asp/Asn) ligase.